A 1003-amino-acid chain; its full sequence is X-linked retinitis pigmentosa GTPase regulator (1003 aa).

RCC1 repeat units lie at residues 54–105, 106–158, 159–208, 209–261, 262–313, and 314–367; these read NKLY…STEG, GKVY…LTED, GELF…VTTE, GQLY…LTEK, AVYT…ITDM, and GLMY…FATP. Serine 418 is subject to Phosphoserine. The interval 460–495 is disordered; the sequence is TPEKEGLTQPEPDYFRDNMAKGKETDNSSATDSESL. A compositionally biased stretch (basic and acidic residues) spans 472-485; the sequence is DYFRDNMAKGKETD. Polar residues predominate over residues 486–495; sequence NSSATDSESL. Phosphoserine is present on serine 520. Disordered regions lie at residues 625-657, 691-760, 794-932, and 968-1003; these read FKAI…LAEM, ESKD…TDQN, LSEI…DVKK, and AFKG…CTIL. Positions 693-715 are enriched in basic and acidic residues; the sequence is KDFVKDSRRNKQDVIFDSERESI. Acidic residues-rich tracts occupy residues 716–726 and 797–821; these read EEPDSYLEGES and IPEE…EANE. The segment covering 827-848 has biased composition (basic and acidic residues); that stretch reads AGKEEKEIEILSDDLTDRAEDH. The span at 849–867 shows a compositional bias: acidic residues; sequence EFSEDEEPEDMAEELDEDL. The span at 882–896 shows a compositional bias: basic and acidic residues; the sequence is SLKKDETTKQEKRAI. The segment covering 913–924 has biased composition (low complexity); it reads SSSSEVLNDSES. Residues 978–989 show a composition bias toward polar residues; that stretch reads QNHMGQNHQDTS. Cysteine 1000 carries the cysteine methyl ester modification. A lipid anchor (S-geranylgeranyl cysteine) is attached at cysteine 1000. Residues 1001-1003 constitute a propeptide, removed in mature form; that stretch reads TIL.

In terms of assembly, interacts with PDE6D. Interacts with RPGRIP1. Interacts with RPGRIP1L. PDE6D, RPGRIP1 and RPGRIP1L may compete for the same binding sites. Interacts with NPM1. Interacts with SMC1A and SMC3. Interacts with CEP290. Interacts with WHRN. Interacts with SPATA7. Interacts with RAB37 and RAB8A (in GDP-bound forms); functions as GEF for RAB37 and RAB8A. Prenylated. As to expression, isoform 1 is expressed exclusively in testis. Isoforms 2, 3 and 4 are widely expressed.

It localises to the golgi apparatus. Its subcellular location is the cell projection. It is found in the cilium. The protein localises to the cytoplasm. The protein resides in the cytoskeleton. It localises to the cilium basal body. Its subcellular location is the microtubule organizing center. It is found in the centrosome. The protein localises to the cilium axoneme. The protein resides in the flagellum axoneme. In terms of biological role, acts as a guanine-nucleotide releasing factor (GEF) for RAB8A and RAB37 by promoting the conversion of inactive RAB-GDP to the active form RAB-GTP. GEF activity towards RAB8A may facilitate ciliary trafficking by modulating ciliary intracellular localization of RAB8A. GEF activity towards RAB37 maintains autophagic homeostasis and retinal function. Involved in photoreceptor integrity. May control cilia formation by regulating actin stress filaments and cell contractility. May be involved in microtubule organization and regulation of transport in primary cilia. May play a critical role in spermatogenesis and in intraflagellar transport processes. In Canis lupus familiaris (Dog), this protein is X-linked retinitis pigmentosa GTPase regulator (RPGR).